The following is a 753-amino-acid chain: MTILNHTLGFPRVGLRRELKKAQESYWAGNSTREELLTVGRELRARHWDQQKQAGIDLLPVGDFAWYDHVLTTSLLLGNVPPRHQNKDGSVDIDTLFRIGRGRAPTGEPAAAAEMTKWFNTNYHYMVPEFVKGQQFKLTWTQLLEEVDEALALGHNVKPVLLGPVTYLWLGKVKGEQFDRLSLLNDILPVYQQVLAELAKRGIEWVQIDEPALVLELPQAWLDAYKPAYDALQGQVKLLLTTYFEGVTPNLDTITALPVQGLHVDLVHGKDDVAELHKRLPSDWLLSAGLINGRNVWRADLTEKYAQIKDIVGKRDLWVASSCSLLHSPIDLSVETRLDAEVKSWFAFALQKCHELALLRDALNSGDTAALAEWSAPIQARRHSTRVHNPAVEKRLAAITAQDSQRANVYEVRAEAQRARFKLPAWPTTTIGSFPQTTEIRTLRLDFKKGNLDANNYRTGIAEHIKQAIVEQERLGLDVLVHGEAERNDMVEYFGEHLDGFVFTQNGWVQSYGSRCVKPPIVIGDISRPAPITVEWAKYAQSLTDKPVKGMLTGPVTILCWSFPREDVSRETIAKQIALALRDEVADLEAAGIGIIQIDEPALREGLPLRRSDWDAYLQWGVEAFRINAAVAKDDTQIHTHMCYCEFNDIMDSIAALDADVITIETSRSDMELLESFEEFDYPNEIGPGVYDIHSPNVPSVEWIEALLKKAAKRIPAERLWVNPDCGLKTRGWPETRAALANMVQAAQNLRRG.

Residues 17-20 and Lys-117 contribute to the 5-methyltetrahydropteroyltri-L-glutamate site; that span reads RELK. L-homocysteine is bound by residues 431–433 and Glu-484; that span reads IGS. L-methionine is bound by residues 431–433 and Glu-484; that span reads IGS. 5-methyltetrahydropteroyltri-L-glutamate contacts are provided by residues 515–516 and Trp-561; that span reads RC. Residue Asp-599 participates in L-homocysteine binding. Position 599 (Asp-599) interacts with L-methionine. Glu-605 lines the 5-methyltetrahydropteroyltri-L-glutamate pocket. Zn(2+) is bound by residues His-641, Cys-643, and Glu-665. His-694 (proton donor) is an active-site residue. Cys-726 contributes to the Zn(2+) binding site.

The protein belongs to the vitamin-B12 independent methionine synthase family. Requires Zn(2+) as cofactor.

It carries out the reaction 5-methyltetrahydropteroyltri-L-glutamate + L-homocysteine = tetrahydropteroyltri-L-glutamate + L-methionine. Its pathway is amino-acid biosynthesis; L-methionine biosynthesis via de novo pathway; L-methionine from L-homocysteine (MetE route): step 1/1. Catalyzes the transfer of a methyl group from 5-methyltetrahydrofolate to homocysteine resulting in methionine formation. This is 5-methyltetrahydropteroyltriglutamate--homocysteine methyltransferase from Escherichia coli O9:H4 (strain HS).